Reading from the N-terminus, the 146-residue chain is Snake venom vascular endothelial growth factor toxin (146 aa).

The signal sequence occupies residues 1–24 (MAAYLLAVAILFCIQGWPLGTVQG). Position 25 is a pyrrolidone carboxylic acid (Q25). Disulfide bonds link C38–C80, C69–C115, and C73–C117. Residues 118-146 (RPRSASGVNSRKHKRNPEEGEQRAKFPFV) are disordered. Over residues 133–146 (NPEEGEQRAKFPFV) the composition is skewed to basic and acidic residues.

The protein belongs to the PDGF/VEGF growth factor family. Snake venom VEGF subfamily. Homodimer; disulfide-linked. Interacts with VEGF receptor-1 (FLT1) with a high affinity, whereas it binds to VEGF receptor-2 (KDR) with a low affinity. Does not bind VEGF receptor-3 (FLT4). As to expression, expressed by the venom gland.

The protein resides in the secreted. Its function is as follows. Snake venom VEGFs that may contribute to venom dispersion and prey subjugation by inducing vascular permeability and hypotension. This protein induces an increase in capillary permeability after intradermal injection, as well as a drastic hypotensive effect after intravenous injection. The hypotension is mediated by nitric oxide (NO), which is produced by VEGF-activated endothelium NO synthase. Also induces angiogenesis in vitro. Like other crotalid VEGFs, this protein interacts with VEGF receptor-1 (FLT1) with a high affinity, whereas it binds to VEGF receptor-2 (KDR) with a low affinity. The polypeptide is Snake venom vascular endothelial growth factor toxin (Bothrops erythromelas (Caatinga lance head)).